A 158-amino-acid polypeptide reads, in one-letter code: NADH-quinone oxidoreductase subunit B (158 aa).

[4Fe-4S] cluster-binding residues include Cys-37, Cys-38, Cys-102, and Cys-132.

The protein belongs to the complex I 20 kDa subunit family. NDH-1 is composed of 14 different subunits. Subunits NuoB, C, D, E, F, and G constitute the peripheral sector of the complex. Requires [4Fe-4S] cluster as cofactor.

It is found in the cell inner membrane. The enzyme catalyses a quinone + NADH + 5 H(+)(in) = a quinol + NAD(+) + 4 H(+)(out). In terms of biological role, NDH-1 shuttles electrons from NADH, via FMN and iron-sulfur (Fe-S) centers, to quinones in the respiratory chain. Couples the redox reaction to proton translocation (for every two electrons transferred, four hydrogen ions are translocated across the cytoplasmic membrane), and thus conserves the redox energy in a proton gradient. This chain is NADH-quinone oxidoreductase subunit B, found in Alkalilimnicola ehrlichii (strain ATCC BAA-1101 / DSM 17681 / MLHE-1).